Consider the following 226-residue polypeptide: Leucyl/phenylalanyl-tRNA--protein transferase (226 aa).

The protein belongs to the L/F-transferase family.

Its subcellular location is the cytoplasm. The catalysed reaction is N-terminal L-lysyl-[protein] + L-leucyl-tRNA(Leu) = N-terminal L-leucyl-L-lysyl-[protein] + tRNA(Leu) + H(+). The enzyme catalyses N-terminal L-arginyl-[protein] + L-leucyl-tRNA(Leu) = N-terminal L-leucyl-L-arginyl-[protein] + tRNA(Leu) + H(+). It catalyses the reaction L-phenylalanyl-tRNA(Phe) + an N-terminal L-alpha-aminoacyl-[protein] = an N-terminal L-phenylalanyl-L-alpha-aminoacyl-[protein] + tRNA(Phe). Functionally, functions in the N-end rule pathway of protein degradation where it conjugates Leu, Phe and, less efficiently, Met from aminoacyl-tRNAs to the N-termini of proteins containing an N-terminal arginine or lysine. This chain is Leucyl/phenylalanyl-tRNA--protein transferase, found in Bradyrhizobium sp. (strain ORS 278).